The chain runs to 295 residues: Aspartate carbamoyltransferase catalytic subunit (295 aa).

2 residues coordinate carbamoyl phosphate: R49 and T50. An L-aspartate-binding site is contributed by K77. Residues R99, H127, and Q130 each coordinate carbamoyl phosphate. 2 residues coordinate L-aspartate: R161 and R212. 2 residues coordinate carbamoyl phosphate: G251 and P252.

It belongs to the aspartate/ornithine carbamoyltransferase superfamily. ATCase family. Heterododecamer (2C3:3R2) of six catalytic PyrB chains organized as two trimers (C3), and six regulatory PyrI chains organized as three dimers (R2).

The enzyme catalyses carbamoyl phosphate + L-aspartate = N-carbamoyl-L-aspartate + phosphate + H(+). Its pathway is pyrimidine metabolism; UMP biosynthesis via de novo pathway; (S)-dihydroorotate from bicarbonate: step 2/3. Functionally, catalyzes the condensation of carbamoyl phosphate and aspartate to form carbamoyl aspartate and inorganic phosphate, the committed step in the de novo pyrimidine nucleotide biosynthesis pathway. The sequence is that of Aspartate carbamoyltransferase catalytic subunit from Campylobacter jejuni (strain RM1221).